The following is a 941-amino-acid chain: MNQLYSFFKNCNSFGAPPPLYTHVFLGSRPGKFYLSASSDNEFYTLYNSLVEAKTPVCVAEKQDDYVPLLGDVDLKVCIDQENAFLKKTRVLYGEEELRAIVKCFQDTIKKNVVDWRDYHLICVALEKKPYMAGEYLKNGFHLHFPYLYLEKEKVKNVIIPKIKEMVAAFRLGSGKRLFADIDDAPENFIDDVTNKCWLMYGSSKSEDKKPYRISQVYSGNLEPMDLYEAFSIKPFYTKEEEPITVTVDNVKKILPQLLSISSIKKEVLNVKTPMDLKIPTKIYLKQELKDIEGENSETIKRNLKDAKDLLKILNKKRANEYNSWWDIGIILFNIGHGCEDAFTIWDKWSSYSDKYDPDACVQVWNSMHLRNPRFSKIKGMGSLRWYVKQDNLKGYTAWVDKMHGLVLDEKNLVECVTRLEIMTTDTPLARLMLDLYSGEYVFSDAGWYSFNGTIWSPVKVLKDFRVKFEHISTKYKEMRKRIMELIYHKNDDSGRDSEEDSQEEEVSSSQEQLSAKHRAILMAKYRDINRAINKLENFATQNGILKMCEVFFYNEDFSDLLDENPLLIAFKNGVFDFETLTFRKGLQSDYLSKTLNIRYDDTLTDDSEEVLELYNFLSKIFPDEKVRAYFVDQICEVFRGGNRDKIAMFWTGNGNNGKSVTQRLFETMIGKKLAVKLSTSVLTERIQPGQPNPQLTRLRGGIRWGVFDEWGKTEQILSGSLNVLTGGDSLPCRDLFQKGSDSSDFTPMFKLLCICNELPCLKDAVDATWDRIRIIPFESKFVAREKCPETEQEQREKKLFLCDTEITQKDRMESLARALGWYLVKIFKEKEKKRRNGTYQVTIPDKVNDAKLKYQAKCDILAFFMEETYLKTDNQDHKIPFDDMYISFKNWYINSFSGKMVTLNKHEFIEMVRNKYNLTETDKALRGYMWNRNYDDSDDE.

Residues 285–323 (LKQELKDIEGENSETIKRNLKDAKDLLKILNKKRANEYN) adopt a coiled-coil conformation. The segment at 492 to 514 (DDSGRDSEEDSQEEEVSSSQEQL) is disordered. Residues 498–507 (SEEDSQEEEV) are compositionally biased toward acidic residues. The 183-residue stretch at 609-791 (EEVLELYNFL…FVAREKCPET (183 aa)) folds into the SF3 helicase domain. 653–660 (GNGNNGKS) contributes to the ATP binding site.

The protein belongs to the IIV-6 184L family.

This is Putative helicase 121R from Invertebrate iridescent virus 3 (IIV-3).